The chain runs to 418 residues: Maltoporin (418 aa).

A signal peptide spans 1 to 26 (MLPMNRNTLGLAVTIATVFVSSTVTA).

This sequence belongs to the porin LamB (TC 1.B.3) family. Homotrimer formed of three 18-stranded antiparallel beta-barrels, containing three independent channels.

The protein resides in the cell outer membrane. It catalyses the reaction beta-maltose(in) = beta-maltose(out). Involved in the transport of maltose and maltodextrins. In Photobacterium profundum (strain SS9), this protein is Maltoporin.